The primary structure comprises 591 residues: Serine/threonine-protein kinase Nek2 (591 aa).

Positions 4–258 (YEVLEQIGKG…AAQLLKHPQL (255 aa)) constitute a Protein kinase domain. Residues 10–18 (IGKGAFGSA) and Lys-33 contribute to the ATP site. The active-site Proton acceptor is the Asp-129. Disordered regions lie at residues 309-331 (LGNERTVTFSKPSPERNSVSSTR), 382-408 (ARNQLEPPKTSYNRTYRSELPSKTTPN), and 500-534 (RTDGDNGSDSSGRNATAASSRGSNDSRQQRFDTSS). 2 stretches are compositionally biased toward polar residues: residues 391 to 408 (TSYNRTYRSELPSKTTPN) and 504 to 534 (DNGSDSSGRNATAASSRGSNDSRQQRFDTSS).

Belongs to the protein kinase superfamily. NEK Ser/Thr protein kinase family. NIMA subfamily. In terms of tissue distribution, expressed in anthers, pistils and leaves.

It catalyses the reaction L-seryl-[protein] + ATP = O-phospho-L-seryl-[protein] + ADP + H(+). The catalysed reaction is L-threonyl-[protein] + ATP = O-phospho-L-threonyl-[protein] + ADP + H(+). Its function is as follows. May be involved in plant development processes. This is Serine/threonine-protein kinase Nek2 from Oryza sativa subsp. japonica (Rice).